A 285-amino-acid chain; its full sequence is Eukaryotic translation initiation factor 3 subunit J (285 aa).

2 disordered regions span residues 1–86 (MSWD…QLDE) and 232–285 (QARL…DDFM). Residues 22-41 (WEDEEDDGPVLESWDVDPEE) are compositionally biased toward acidic residues. A coiled-coil region spans residues 36 to 81 (DVDPEEEEKKKKEAKLQEAKRKAELKAKEDAEKAKKDAKRKELEQF). Residues 42–86 (EEKKKKEAKLQEAKRKAELKAKEDAEKAKKDAKRKELEQFDQLDE) are compositionally biased toward basic and acidic residues. Acidic residues predominate over residues 269–285 (DDMDDGQFDDLDDDDFM).

This sequence belongs to the eIF-3 subunit J family. Component of the eukaryotic translation initiation factor 3 (eIF-3) complex.

It localises to the cytoplasm. Component of the eukaryotic translation initiation factor 3 (eIF-3) complex, which is involved in protein synthesis of a specialized repertoire of mRNAs and, together with other initiation factors, stimulates binding of mRNA and methionyl-tRNAi to the 40S ribosome. The eIF-3 complex specifically targets and initiates translation of a subset of mRNAs involved in cell proliferation. The polypeptide is Eukaryotic translation initiation factor 3 subunit J (Candida albicans (strain SC5314 / ATCC MYA-2876) (Yeast)).